Here is a 432-residue protein sequence, read N- to C-terminus: Crenactin (432 aa).

Residues 20 to 24 (TSYVK), 182 to 184 (GGH), 235 to 239 (EVVKR), 354 to 358 (GAFSW), and glutamine 399 each bind ATP.

The protein belongs to the actin family. In terms of assembly, monomer. The crenactin monomers polymerize into right-handed helical filaments, with 8 subunits per complete turn of the helix. Forms single-stranded filaments under high salt concentrations and double-stranded filaments under low salt concentrations. Interacts with arcadin-1 and arcadin-2.

The protein localises to the cytoplasm. The protein resides in the cytoskeleton. It carries out the reaction ATP + H2O = ADP + phosphate + H(+). Its activity is regulated as follows. Crenactin polymerization is inhibited by interaction with arcadin-2. Also significantly inhibited by elevated antibiotic A22 concentrations. Its function is as follows. Forms the backbone of an actin-like archaeal cytoskeleton, which is involved in cell shape determination. Has ATPase activity. Shows highest activity towards ATP or GTP as nucleotide, and only residual activity on UTP, CTP and dNTPs. This Pyrobaculum calidifontis (strain DSM 21063 / JCM 11548 / VA1) protein is Crenactin.